The primary structure comprises 253 residues: Ubiquinone/menaquinone biosynthesis C-methyltransferase UbiE (253 aa).

Residues threonine 76, aspartate 97, and 125-126 (NA) contribute to the S-adenosyl-L-methionine site.

It belongs to the class I-like SAM-binding methyltransferase superfamily. MenG/UbiE family.

The enzyme catalyses a 2-demethylmenaquinol + S-adenosyl-L-methionine = a menaquinol + S-adenosyl-L-homocysteine + H(+). It catalyses the reaction a 2-methoxy-6-(all-trans-polyprenyl)benzene-1,4-diol + S-adenosyl-L-methionine = a 5-methoxy-2-methyl-3-(all-trans-polyprenyl)benzene-1,4-diol + S-adenosyl-L-homocysteine + H(+). It functions in the pathway quinol/quinone metabolism; menaquinone biosynthesis; menaquinol from 1,4-dihydroxy-2-naphthoate: step 2/2. The protein operates within cofactor biosynthesis; ubiquinone biosynthesis. In terms of biological role, methyltransferase required for the conversion of demethylmenaquinol (DMKH2) to menaquinol (MKH2) and the conversion of 2-polyprenyl-6-methoxy-1,4-benzoquinol (DDMQH2) to 2-polyprenyl-3-methyl-6-methoxy-1,4-benzoquinol (DMQH2). The polypeptide is Ubiquinone/menaquinone biosynthesis C-methyltransferase UbiE (Stenotrophomonas maltophilia (strain K279a)).